The sequence spans 110 residues: Small EDRK-rich factor 1 (110 aa).

Basic and acidic residues predominate over residues 1–30; that stretch reads MARGNQRELARQKNMKKTQEISKGKRKEDS. The segment at 1–61 is disordered; sequence MARGNQRELA…GPHLPLKAPR (61 aa). Residues 11 to 17 are required for SNCA binding; that stretch reads RQKNMKK. Positions 34-50 are enriched in low complexity; the sequence is SQRKQSSGGQKSESKMS.

It belongs to the SERF family. In terms of assembly, interacts with SNCA; this interaction promotes the aggregation of SNCA. Isoform Long is predominantly expressed in heart, brain and skeletal muscle. Isoform Short and Isoform Long are expressed throughout the central nervous system, including spinal cord.

The protein resides in the cytoplasm. It is found in the cytosol. The protein localises to the nucleus. Functionally, positive regulator of amyloid protein aggregation and proteotoxicity. Induces conformational changes in amyloid proteins, such as APP, HTT, and SNCA, driving them into compact formations preceding the formation of aggregates. In Homo sapiens (Human), this protein is Small EDRK-rich factor 1 (SERF1A).